We begin with the raw amino-acid sequence, 128 residues long: Cytochrome c-type biogenesis protein CcmE (128 aa).

Residues 1–8 lie on the Cytoplasmic side of the membrane; that stretch reads MQKRVRNR. A helical; Signal-anchor for type II membrane protein membrane pass occupies residues 9–29; the sequence is LITIIICFCSACLGISIILYN. The Periplasmic portion of the chain corresponds to 30 to 128; it reads LEKNIVFFLP…KHDENYRPPQ (99 aa). Heme-binding residues include histidine 120 and tyrosine 124.

This sequence belongs to the CcmE/CycJ family.

It localises to the cell inner membrane. Heme chaperone required for the biogenesis of c-type cytochromes. Transiently binds heme delivered by CcmC and transfers the heme to apo-cytochromes in a process facilitated by CcmF and CcmH. In Rickettsia peacockii (strain Rustic), this protein is Cytochrome c-type biogenesis protein CcmE.